The primary structure comprises 2104 residues: Myosin type-2 heavy chain 2 (2104 aa).

The Myosin N-terminal SH3-like domain maps to 35–85 (DERTWIWIPDSKESFVKAWIVEDLGEKYRVKLERDGSERIVDGFDAEKVNP). A Myosin motor domain is found at 89 to 767 (DMVDDMAALT…VLGSLEDRRN (679 aa)). 182–189 (GESGAGKT) lines the ATP pocket. Residues 646–660 (LSSLMHQLEATQPHF) are actin-binding. Residues 829–2104 (LGTTQTDEYL…RSNRSPSVLR (1276 aa)) are a coiled coil. Disordered stretches follow at residues 1245-1278 (NRSV…DGNN) and 1398-1426 (MEFT…SKRS). The segment covering 1246-1259 (RSVTQHTLDGNSPH) has biased composition (polar residues). Residues 1261-1278 (SFEEKHSGDPLKRIDGNN) are compositionally biased toward basic and acidic residues. The segment covering 1409–1424 (SKISNLPSSQPGSPSK) has biased composition (polar residues). Serine 1421 bears the Phosphoserine mark.

It belongs to the TRAFAC class myosin-kinesin ATPase superfamily. Myosin family. Binds to cdc4 and rlc1.

Its function is as follows. Stabilizes the F-actin cables forming the F-actin ring that surrounds the nucleus during interphase. May work in conjunction with myo2. The protein is Myosin type-2 heavy chain 2 (myo3) of Schizosaccharomyces pombe (strain 972 / ATCC 24843) (Fission yeast).